We begin with the raw amino-acid sequence, 150 residues long: 6,7-dimethyl-8-ribityllumazine synthase (150 aa).

Residues phenylalanine 11, 43-45 (VYD), and 67-69 (AVI) contribute to the 5-amino-6-(D-ribitylamino)uracil site. Position 72-73 (72-73 (AT)) interacts with (2S)-2-hydroxy-3-oxobutyl phosphate. Histidine 75 functions as the Proton donor in the catalytic mechanism. Leucine 100 contacts 5-amino-6-(D-ribitylamino)uracil. Arginine 115 serves as a coordination point for (2S)-2-hydroxy-3-oxobutyl phosphate.

This sequence belongs to the DMRL synthase family.

It carries out the reaction (2S)-2-hydroxy-3-oxobutyl phosphate + 5-amino-6-(D-ribitylamino)uracil = 6,7-dimethyl-8-(1-D-ribityl)lumazine + phosphate + 2 H2O + H(+). Its pathway is cofactor biosynthesis; riboflavin biosynthesis; riboflavin from 2-hydroxy-3-oxobutyl phosphate and 5-amino-6-(D-ribitylamino)uracil: step 1/2. Functionally, catalyzes the formation of 6,7-dimethyl-8-ribityllumazine by condensation of 5-amino-6-(D-ribitylamino)uracil with 3,4-dihydroxy-2-butanone 4-phosphate. This is the penultimate step in the biosynthesis of riboflavin. The sequence is that of 6,7-dimethyl-8-ribityllumazine synthase from Pyrobaculum aerophilum (strain ATCC 51768 / DSM 7523 / JCM 9630 / CIP 104966 / NBRC 100827 / IM2).